The following is a 79-amino-acid chain: MTKEQILVDVQEAVAEKLGKDVSEITAEKSFKDDLGADSLEVMEMVMDLEDKFDITIEDEDAEKLATVGDVVAYIETKL.

A Carrier domain is found at 4–79 (EQILVDVQEA…DVVAYIETKL (76 aa)). The residue at position 39 (Ser39) is an O-(pantetheine 4'-phosphoryl)serine.

The protein belongs to the acyl carrier protein (ACP) family. Post-translationally, 4'-phosphopantetheine is transferred from CoA to a specific serine of apo-ACP by AcpS. This modification is essential for activity because fatty acids are bound in thioester linkage to the sulfhydryl of the prosthetic group.

The protein resides in the cytoplasm. Its pathway is lipid metabolism; fatty acid biosynthesis. Carrier of the growing fatty acid chain in fatty acid biosynthesis. In Exiguobacterium sp. (strain ATCC BAA-1283 / AT1b), this protein is Acyl carrier protein.